The primary structure comprises 98 residues: Cell cycle protein GpsB (98 aa).

Positions 34–71 (LDIVIKDYEAFQQELDELRQENARLKRQVEELQKRPTT) form a coiled coil.

This sequence belongs to the GpsB family. As to quaternary structure, forms polymers through the coiled coil domains. Interacts with PBP1, MreC and EzrA.

The protein resides in the cytoplasm. Its function is as follows. Divisome component that associates with the complex late in its assembly, after the Z-ring is formed, and is dependent on DivIC and PBP2B for its recruitment to the divisome. Together with EzrA, is a key component of the system that regulates PBP1 localization during cell cycle progression. Its main role could be the removal of PBP1 from the cell pole after pole maturation is completed. Also contributes to the recruitment of PBP1 to the division complex. Not essential for septum formation. This Geobacillus thermodenitrificans (strain NG80-2) protein is Cell cycle protein GpsB.